Here is a 666-residue protein sequence, read N- to C-terminus: Peptidase S41 family protein phomP1' (666 aa).

Residues methionine 1–serine 27 form the signal peptide. N-linked (GlcNAc...) asparagine glycosylation is found at asparagine 70, asparagine 214, and asparagine 234. The tract at residues aspartate 303–valine 504 is peptidase S41 domain. N-linked (GlcNAc...) asparagine glycans are attached at residues asparagine 555 and asparagine 612.

This sequence belongs to the peptidase S41A family.

It functions in the pathway mycotoxin biosynthesis. Its function is as follows. Peptidase S41 family protein; part of the gene cluster that mediates the biosynthesis of the phomopsins, a group of hexapeptide mycotoxins which infects lupins and causes lupinosis disease in livestock. Within the pathway, phomP1 and phomP1' are probably involved in the processing of the phomA and phomA' precursors. The pathway starts with the processing of the precursor phomA by several endopeptidases including kexin proteases as well as the cluster-specific S41 family peptidase phomP1 and the oligopeptidase phomG to produce 10 identical copies of the hexapeptide Tyr-Val-Ile-Pro-Ile-Asp. After being excised from the precursor peptide, the core peptides are cyclized and modified post-translationally by enzymes encoded within the gene cluster. The timing and order of proteolysis of the phomA precursor and PTMs are still unknown. Two tyrosinase-like enzymes, phomQ1 and phomQ2, catalyze the chlorination and hydroxylation of Tyr, respectively. PhomYb, is proposed to be involved in the construction of the macrocyclic structure. The other 4 ustYa family proteins may be involved in PTMs that generate the unique structure of phomopsin A. PhomYa is required for the hydroxylation of C-beta of Tyr. PhomYc, phomYd, and phomYe are responsible for the biosynthesis of 2,3-dehydroisoleucine (dIle), 2,3-dehydroaspartic acid (dAsp), and 3,4-dehydroproline (dPro), respectively. While dIle formation by phomYc is indispensable for the installation of dAsp by phomYd, the order of the other PTMs have not been elucidated yet. Most of the biosynthetic enzymes likely have broad substrate specificity, and thus, there might be a metabolic grid from a precursor to phomopsin A. The enzyme(s) responsible for the biosynthesis of 3,4-dehydrovaline (dVal) have also not been identified yet. Finally, phomM acts as an S-adenosylmethionine-dependent alpha-N-methyltransferase that catalyzes two successive N-methylation reactions, converting N-desmethyl-phomopsin A to phomopsin A and phomopsin A further to an N,N-dimethylated congener called phomopsin E. The polypeptide is Peptidase S41 family protein phomP1' (Diaporthe leptostromiformis (Lupinosis disease fungus)).